The sequence spans 92 residues: Small ribosomal subunit protein uS19 (92 aa).

Residues 73–92 (EFSPTRSFRGHAGAKNKGRK) form a disordered region. Residues 80–92 (FRGHAGAKNKGRK) show a composition bias toward basic residues.

It belongs to the universal ribosomal protein uS19 family.

Its function is as follows. Protein S19 forms a complex with S13 that binds strongly to the 16S ribosomal RNA. In Christiangramia forsetii (strain DSM 17595 / CGMCC 1.15422 / KT0803) (Gramella forsetii), this protein is Small ribosomal subunit protein uS19.